Consider the following 195-residue polypeptide: Large ribosomal subunit protein eL15 (195 aa).

The interval G174–R195 is disordered.

This sequence belongs to the eukaryotic ribosomal protein eL15 family.

This chain is Large ribosomal subunit protein eL15, found in Picrophilus torridus (strain ATCC 700027 / DSM 9790 / JCM 10055 / NBRC 100828 / KAW 2/3).